We begin with the raw amino-acid sequence, 559 residues long: Nuclear envelope integral membrane protein (559 aa).

Positions 1 to 15 (MRLLTLALLVAGSLA) are cleaved as a signal peptide. N-linked (GlcNAc...) asparagine glycosylation is found at asparagine 67, asparagine 81, and asparagine 114. The next 5 helical transmembrane spans lie at 164-184 (YTSG…FIVW), 192-212 (IGVP…HFAW), 218-238 (IMIE…LISM), 267-287 (LIYF…ALII), and 290-310 (ICRG…KAVW). Residues asparagine 408 and asparagine 465 are each glycosylated (N-linked (GlcNAc...) asparagine). Disordered regions lie at residues 475-494 (RRDS…PRMP) and 510-559 (KNGR…DADE). The segment covering 517 to 526 (PSSSTASGMT) has biased composition (polar residues). A compositionally biased stretch (basic and acidic residues) spans 530–539 (YMRKARRIDA).

The protein belongs to the NEMP family.

The protein localises to the nucleus inner membrane. Its function is as follows. Contributes to nuclear envelope stiffness in germ cells. Required for fertility. The polypeptide is Nuclear envelope integral membrane protein (Caenorhabditis elegans).